A 345-amino-acid polypeptide reads, in one-letter code: Magnesium-chelatase 38 kDa subunit (345 aa).

35–42 (GDRGTGKS) serves as a coordination point for ATP.

It belongs to the Mg-chelatase subunits D/I family.

The catalysed reaction is protoporphyrin IX + Mg(2+) + ATP + H2O = Mg-protoporphyrin IX + ADP + phosphate + 3 H(+). It participates in porphyrin-containing compound metabolism; bacteriochlorophyll biosynthesis. In terms of biological role, involved in bacteriochlorophyll biosynthesis; introduces a magnesium ion into protoporphyrin IX to yield Mg-protoporphyrin IX. In Acidiphilium rubrum, this protein is Magnesium-chelatase 38 kDa subunit (bchI).